A 244-amino-acid chain; its full sequence is Krueppel-like factor 9 (244 aa).

2 disordered regions span residues 24–51 (VPEH…GDPG) and 79–143 (PSVC…EKRH). Over residues 32 to 51 (DAERLRLPEREVTKEHGDPG) the composition is skewed to basic and acidic residues. Position 122 is a phosphoserine (Ser-122). Basic residues predominate over residues 134–143 (KGKHASEKRH). 3 C2H2-type zinc fingers span residues 143–167 (HKCP…YRVH), 173–197 (FPCT…YRTH), and 203–225 (FRCP…ARRH).

The protein belongs to the Sp1 C2H2-type zinc-finger protein family. As to quaternary structure, interacts with ZZEF1.

The protein localises to the nucleus. Transcription factor that binds to GC box promoter elements. Selectively activates mRNA synthesis from genes containing tandem repeats of GC boxes but represses genes with a single GC box. Acts as an epidermal circadian transcription factor regulating keratinocyte proliferation. The chain is Krueppel-like factor 9 (Klf9) from Rattus norvegicus (Rat).